The primary structure comprises 218 residues: Peptide methionine sulfoxide reductase MsrA (218 aa).

Residue cysteine 57 is part of the active site.

It belongs to the MsrA Met sulfoxide reductase family.

The catalysed reaction is L-methionyl-[protein] + [thioredoxin]-disulfide + H2O = L-methionyl-(S)-S-oxide-[protein] + [thioredoxin]-dithiol. It catalyses the reaction [thioredoxin]-disulfide + L-methionine + H2O = L-methionine (S)-S-oxide + [thioredoxin]-dithiol. In terms of biological role, has an important function as a repair enzyme for proteins that have been inactivated by oxidation. Catalyzes the reversible oxidation-reduction of methionine sulfoxide in proteins to methionine. This is Peptide methionine sulfoxide reductase MsrA from Brucella suis biovar 1 (strain 1330).